A 162-amino-acid chain; its full sequence is Phosphopantetheine adenylyltransferase (162 aa).

Ser11 provides a ligand contact to substrate. Residues 11 to 12 and His19 contribute to the ATP site; that span reads SF. Positions 43, 76, and 90 each coordinate substrate. Residues 91 to 93, Glu101, and 126 to 132 each bind ATP; these read GLR and HLYISSS.

Belongs to the bacterial CoaD family. Homohexamer. The cofactor is Mg(2+).

It is found in the cytoplasm. The enzyme catalyses (R)-4'-phosphopantetheine + ATP + H(+) = 3'-dephospho-CoA + diphosphate. It functions in the pathway cofactor biosynthesis; coenzyme A biosynthesis; CoA from (R)-pantothenate: step 4/5. Reversibly transfers an adenylyl group from ATP to 4'-phosphopantetheine, yielding dephospho-CoA (dPCoA) and pyrophosphate. This Streptococcus pneumoniae (strain Taiwan19F-14) protein is Phosphopantetheine adenylyltransferase.